Consider the following 529-residue polypeptide: Basal body-orientation factor 1 (529 aa).

Basic residues predominate over residues 1 to 13 (MPSKGKDKKKGKS). Residues 1–22 (MPSKGKDKKKGKSRGKDTKKLI) are disordered. Coiled coils occupy residues 55–198 (DTSR…LKQE) and 271–361 (IKEK…EVER). The disordered stretch occupies residues 510-529 (GKVVLPTIPKGPQESDTGTF).

The protein belongs to the BBOF1 family. In terms of assembly, interacts with MNS1 and ODF2.

The protein resides in the cytoplasm. Its subcellular location is the cytoskeleton. It is found in the cilium basal body. The protein localises to the flagellum axoneme. In terms of biological role, plays an essential role in sperm motility and male fertility by stabilizing the sperm flagellar axonemal structure. May be required for the stability of ODF2 and MANS1 proteins. Dispensable for the assembly and function of motile cilia. This Macaca fascicularis (Crab-eating macaque) protein is Basal body-orientation factor 1.